A 655-amino-acid polypeptide reads, in one-letter code: 1-deoxy-D-xylulose-5-phosphate synthase (655 aa).

Residues H73 and 114–116 contribute to the thiamine diphosphate site; that span reads SHA. D145 provides a ligand contact to Mg(2+). Thiamine diphosphate is bound by residues 146–147, N174, Y285, and E367; that span reads GA. N174 is a Mg(2+) binding site. Residues 626 to 655 form a disordered region; it reads RQPAIEDDPTSPGEAAPAGERAGEAIGDQR. Residues 646–655 show a composition bias toward basic and acidic residues; the sequence is RAGEAIGDQR.

The protein belongs to the transketolase family. DXPS subfamily. In terms of assembly, homodimer. Requires Mg(2+) as cofactor. Thiamine diphosphate is required as a cofactor.

It carries out the reaction D-glyceraldehyde 3-phosphate + pyruvate + H(+) = 1-deoxy-D-xylulose 5-phosphate + CO2. It participates in metabolic intermediate biosynthesis; 1-deoxy-D-xylulose 5-phosphate biosynthesis; 1-deoxy-D-xylulose 5-phosphate from D-glyceraldehyde 3-phosphate and pyruvate: step 1/1. In terms of biological role, catalyzes the acyloin condensation reaction between C atoms 2 and 3 of pyruvate and glyceraldehyde 3-phosphate to yield 1-deoxy-D-xylulose-5-phosphate (DXP). This is 1-deoxy-D-xylulose-5-phosphate synthase from Frankia casuarinae (strain DSM 45818 / CECT 9043 / HFP020203 / CcI3).